Here is a 506-residue protein sequence, read N- to C-terminus: UPF0522 protein A (506 aa).

The first 18 residues, 1–18, serve as a signal peptide directing secretion; sequence MIKSLLLLISIIIGIVIS. N-linked (GlcNAc...) asparagine glycans are attached at residues N145, N155, N330, N366, N418, and N427.

Belongs to the UPF0522 family.

It is found in the secreted. This chain is UPF0522 protein A, found in Dictyostelium discoideum (Social amoeba).